A 257-amino-acid polypeptide reads, in one-letter code: NH(3)-dependent NAD(+) synthetase (257 aa).

32 to 39 lines the ATP pocket; that stretch reads GLSGGVDS. Asp38 lines the Mg(2+) pocket. Arg113 serves as a coordination point for deamido-NAD(+). Residue Thr133 participates in ATP binding. Glu138 is a binding site for Mg(2+). Residues Lys162 and Ser184 each coordinate ATP.

This sequence belongs to the NAD synthetase family. In terms of assembly, homodimer.

The catalysed reaction is deamido-NAD(+) + NH4(+) + ATP = AMP + diphosphate + NAD(+) + H(+). Its pathway is cofactor biosynthesis; NAD(+) biosynthesis; NAD(+) from deamido-NAD(+) (ammonia route): step 1/1. In terms of biological role, catalyzes the ATP-dependent amidation of deamido-NAD to form NAD. Uses ammonia as a nitrogen source. The polypeptide is NH(3)-dependent NAD(+) synthetase (Wolinella succinogenes (strain ATCC 29543 / DSM 1740 / CCUG 13145 / JCM 31913 / LMG 7466 / NCTC 11488 / FDC 602W) (Vibrio succinogenes)).